A 347-amino-acid chain; its full sequence is Dihydroorotase (347 aa).

Residues His-14 and His-16 each contribute to the Zn(2+) site. Substrate-binding positions include 16-18 and Asn-42; that span reads HLR. Positions 100, 137, and 175 each coordinate Zn(2+). Lys-100 is modified (N6-carboxylysine). His-137 contributes to the substrate binding site. Substrate is bound at residue Leu-220. Asp-248 serves as a coordination point for Zn(2+). The active site involves Asp-248. Substrate contacts are provided by His-252 and Ala-264.

Belongs to the metallo-dependent hydrolases superfamily. DHOase family. Class II DHOase subfamily. Homodimer. It depends on Zn(2+) as a cofactor.

It catalyses the reaction (S)-dihydroorotate + H2O = N-carbamoyl-L-aspartate + H(+). It functions in the pathway pyrimidine metabolism; UMP biosynthesis via de novo pathway; (S)-dihydroorotate from bicarbonate: step 3/3. Functionally, catalyzes the reversible cyclization of carbamoyl aspartate to dihydroorotate. The protein is Dihydroorotase of Pseudomonas savastanoi pv. phaseolicola (strain 1448A / Race 6) (Pseudomonas syringae pv. phaseolicola (strain 1448A / Race 6)).